A 288-amino-acid chain; its full sequence is Alpha/beta hydrolase domain-containing protein 17B (288 aa).

Active-site charge relay system residues include Ser-170, Asp-235, and His-264. Position 282 is a phosphoserine (Ser-282).

Belongs to the AB hydrolase superfamily. ABHD17 family. Palmitoylated on cysteine residues located in a cysteine cluster at the N-terminus which promotes membrane localization. Palmitoylation is required for post-synaptic localization and for depalmitoylating activity towards DLG4/PSD95.

Its subcellular location is the cell membrane. The protein resides in the recycling endosome membrane. The protein localises to the cell projection. It localises to the dendritic spine. It is found in the postsynaptic density membrane. The catalysed reaction is S-hexadecanoyl-L-cysteinyl-[protein] + H2O = L-cysteinyl-[protein] + hexadecanoate + H(+). With respect to regulation, inhibited by palmostatin-B. Its function is as follows. Hydrolyzes fatty acids from S-acylated cysteine residues in proteins. Has depalmitoylating activity towards DLG4/PSD95. Has depalmitoylating activity towards GAP43. Has depalmitoylating activity towards MAP6. Has depalmitoylating activity towards NRAS. The chain is Alpha/beta hydrolase domain-containing protein 17B from Homo sapiens (Human).